Reading from the N-terminus, the 549-residue chain is MSISSLHRGYQVLRTLLHYGLDELLAKDKRPKLFPLIRGCFFWIRNQHKDKSAAERLKLAMQELGPVYIKLGQMLSTRRDLLDDEWAYQLAMLQDRVPPFDSALAREAIETELNASIDSLFDDFDDVPLASASIAQVHSATLKSNGKAVVLKVLRPNVEALILADLQLMSHCAALLERILGDGNRLRPAEVIEDYRLTILGELNLKLEALNAIKLRNNFLDSDALYVPYIYEDLSFTRLIVMERIYGIAVSDLSALKAQGTNLKLLAERGVELFFTQVFRDNFFHADMHPGNIFISRDHPDNPYYIGLDCGIMGTLTDVDKRYLAENFLAFFNRDYQRIAQLHLESGWVSEHTDIVAFEQAIKIVCEPMFNKPLAEISFGHVLLALFRTARQFNMVVQPQLVLLQKTLLYIEGLGRQLYPQLDLWQTAKPFLEQWMAKQVGPKALFDKFKSNAPFWAEKLPELPELVYDNLKLGRKLLGTQQQMLDKYLKYQHKAHKSNYLLITSAVFVICGTILFTQAVTLWASLLCLGTGAGLWLLGWQARPKNRKL.

The region spanning 123–501 (DFDDVPLASA…QHKAHKSNYL (379 aa)) is the Protein kinase domain. ATP-binding positions include 129-137 (LASASIAQV) and Lys-152. The active-site Proton acceptor is the Asp-287. Transmembrane regions (helical) follow at residues 498-517 (SNYLLITSAVFVICGTILFT) and 521-540 (TLWASLLCLGTGAGLWLLGW).

It belongs to the ABC1 family. UbiB subfamily.

The protein resides in the cell inner membrane. The protein operates within cofactor biosynthesis; ubiquinone biosynthesis [regulation]. In terms of biological role, is probably a protein kinase regulator of UbiI activity which is involved in aerobic coenzyme Q (ubiquinone) biosynthesis. The polypeptide is Probable protein kinase UbiB (Shewanella denitrificans (strain OS217 / ATCC BAA-1090 / DSM 15013)).